Reading from the N-terminus, the 287-residue chain is N-acetylmannosamine kinase (287 aa).

Residues 5–12 and 131–138 contribute to the ATP site; these read AIDIGGTK and GVGGGIII. Zn(2+) contacts are provided by His155, Cys165, Cys167, and Cys172.

The protein belongs to the ROK (NagC/XylR) family. NanK subfamily. Homodimer.

The enzyme catalyses an N-acyl-D-mannosamine + ATP = an N-acyl-D-mannosamine 6-phosphate + ADP + H(+). It participates in amino-sugar metabolism; N-acetylneuraminate degradation; D-fructose 6-phosphate from N-acetylneuraminate: step 2/5. In terms of biological role, catalyzes the phosphorylation of N-acetylmannosamine (ManNAc) to ManNAc-6-P. In Vibrio cholerae serotype O1 (strain ATCC 39541 / Classical Ogawa 395 / O395), this protein is N-acetylmannosamine kinase.